A 526-amino-acid polypeptide reads, in one-letter code: Peptide chain release factor 3 (526 aa).

One can recognise a tr-type G domain in the interval 8-277 (NKRRTFAIIS…GLTEWAPKPQ (270 aa)). Residues 17-24 (SHPDAGKT), 85-89 (DTPGH), and 139-142 (NKLD) contribute to the GTP site.

Belongs to the TRAFAC class translation factor GTPase superfamily. Classic translation factor GTPase family. PrfC subfamily.

Its subcellular location is the cytoplasm. Increases the formation of ribosomal termination complexes and stimulates activities of RF-1 and RF-2. It binds guanine nucleotides and has strong preference for UGA stop codons. It may interact directly with the ribosome. The stimulation of RF-1 and RF-2 is significantly reduced by GTP and GDP, but not by GMP. The protein is Peptide chain release factor 3 of Haemophilus ducreyi (strain 35000HP / ATCC 700724).